We begin with the raw amino-acid sequence, 272 residues long: Shikimate dehydrogenase (NADP(+)) (272 aa).

Residues 14-16 (SRS) and Thr-61 contribute to the shikimate site. Lys-65 serves as the catalytic Proton acceptor. Glu-77 is a binding site for NADP(+). Residues Asn-86 and Asp-102 each contribute to the shikimate site. NADP(+) is bound by residues 126 to 130 (GVGGA), 149 to 154 (NRTFPR), and Met-213. Position 215 (Tyr-215) interacts with shikimate. Gly-237 contacts NADP(+).

This sequence belongs to the shikimate dehydrogenase family. In terms of assembly, homodimer.

It catalyses the reaction shikimate + NADP(+) = 3-dehydroshikimate + NADPH + H(+). The protein operates within metabolic intermediate biosynthesis; chorismate biosynthesis; chorismate from D-erythrose 4-phosphate and phosphoenolpyruvate: step 4/7. In terms of biological role, involved in the biosynthesis of the chorismate, which leads to the biosynthesis of aromatic amino acids. Catalyzes the reversible NADPH linked reduction of 3-dehydroshikimate (DHSA) to yield shikimate (SA). This chain is Shikimate dehydrogenase (NADP(+)), found in Sodalis glossinidius (strain morsitans).